Here is a 213-residue protein sequence, read N- to C-terminus: Probable thymidylate kinase 2 (213 aa).

10–17 contacts ATP; that stretch reads GIDGSGKS.

The protein belongs to the thymidylate kinase family.

It carries out the reaction dTMP + ATP = dTDP + ADP. The polypeptide is Probable thymidylate kinase 2 (tmk2) (Saccharolobus solfataricus (strain ATCC 35092 / DSM 1617 / JCM 11322 / P2) (Sulfolobus solfataricus)).